Reading from the N-terminus, the 151-residue chain is Transcriptional repressor NrdR (151 aa).

The segment at 3–34 (CPYCGYIEDRVIDSRPTDEGSAIRRRRECSKC) is a zinc-finger region. One can recognise an ATP-cone domain in the interval 49 to 139 (IMVIKKDKSR…VYRQFKDINT (91 aa)).

The protein belongs to the NrdR family. Zn(2+) serves as cofactor.

Negatively regulates transcription of bacterial ribonucleotide reductase nrd genes and operons by binding to NrdR-boxes. In Acetivibrio thermocellus (strain ATCC 27405 / DSM 1237 / JCM 9322 / NBRC 103400 / NCIMB 10682 / NRRL B-4536 / VPI 7372) (Clostridium thermocellum), this protein is Transcriptional repressor NrdR.